We begin with the raw amino-acid sequence, 389 residues long: Nuclear receptor subfamily 2 group F member 1-B (389 aa).

The interval 19-39 is disordered; sequence DDQSAAGREHLQHRHSPKSAE. The nuclear receptor DNA-binding region spans 51-126; that stretch reads HVECVVCGDK…VGMRREAVQR (76 aa). NR C4-type zinc fingers lie at residues 54–74 and 90–109; these read CVVC…CEGC and CRAN…CQYC. Positions 152–378 constitute an NR LBD domain; sequence YLSGYISLLL…TLIRDMLLSG (227 aa).

It belongs to the nuclear hormone receptor family. NR2 subfamily. As to expression, expressed the retina, where expression is restricted to the outer nuclear layer.

Its subcellular location is the nucleus. In terms of biological role, putative transcription factor that is required in photoreceptor cells precursors during eye development. The chain is Nuclear receptor subfamily 2 group F member 1-B from Danio rerio (Zebrafish).